Consider the following 427-residue polypeptide: MHLIDYLLLLLVGLLALSHGQLHVEHDGESCSNSSHQQILETGEGSPSLKIAPANADFAFRFYYLIASETPGKNIFFSPLSISAAYAMLSLGACSHSRSQILEGLGFNLTELSESDVHRGFQHLLHTLNLPGHGLETRVGSALFLSHNLKFLAKFLNDTMAVYEAKLFHTNFYDTVGTIQLINDHVKKETRGKIVDLVSELKKDVLMVLVNYIYFKALWEKPFISSRTTPKDFYVDENTTVRVPMMLQDQEHHWYLHDRYLPCSVLRMDYKGDATVFFILPNQGKMREIEEVLTPEMLMRWNNLLRKRNFYKKLELHLPKFSISGSYVLDQILPRLGFTDLFSKWADLSGITKQQKLEASKSFHKATLDVDEAGTEAAAATSFAIKFFSAQTNRHILRFNRPFLVVIFSTSTQSVLFLGKVVDPTKP.

The first 20 residues, 1-20 (MHLIDYLLLLLVGLLALSHG), serve as a signal peptide directing secretion. N-linked (GlcNAc...) asparagine glycosylation is found at N33, N108, and N157. The N-linked (GlcNAc...) (complex) asparagine glycan is linked to N238.

This sequence belongs to the serpin family. Monomer and some homodimers. In terms of processing, the N-terminus is blocked. In terms of tissue distribution, expressed by the liver and secreted in plasma.

It localises to the secreted. Inhibits human amidolytic and kininogenase activities of tissue kallikrein. Inhibition is achieved by formation of an equimolar, heat- and SDS-stable complex between the inhibitor and the enzyme, and generation of a small C-terminal fragment of the inhibitor due to cleavage at the reactive site by tissue kallikrein. The chain is Kallistatin (SERPINA4) from Homo sapiens (Human).